Reading from the N-terminus, the 160-residue chain is Putative tRNA (cytidine(34)-2'-O)-methyltransferase (160 aa).

S-adenosyl-L-methionine contacts are provided by isoleucine 82, glycine 107, leucine 128, and serine 136.

It belongs to the class IV-like SAM-binding methyltransferase superfamily. RNA methyltransferase TrmH family. TrmL subfamily.

Its subcellular location is the cytoplasm. It carries out the reaction cytidine(34) in tRNA + S-adenosyl-L-methionine = 2'-O-methylcytidine(34) in tRNA + S-adenosyl-L-homocysteine + H(+). It catalyses the reaction 5-carboxymethylaminomethyluridine(34) in tRNA(Leu) + S-adenosyl-L-methionine = 5-carboxymethylaminomethyl-2'-O-methyluridine(34) in tRNA(Leu) + S-adenosyl-L-homocysteine + H(+). Could methylate the ribose at the nucleotide 34 wobble position in tRNA. The protein is Putative tRNA (cytidine(34)-2'-O)-methyltransferase (cspR) of Bacillus subtilis (strain 168).